A 357-amino-acid polypeptide reads, in one-letter code: cAMP-responsive element modulator (357 aa).

The KID domain occupies 101–160 (TVQVATIAETDDSADSEVIDSHKRREILSRRPSYRKILNELSSDVPGIPKIEEEKSEEEG). A phosphoserine mark is found at serine 116, serine 142, serine 284, serine 287, and serine 290. In terms of domain architecture, bZIP spans 299–357 (TRKRELRLMKNREAAKECRRRKKEYVKCLESRVAVLEVQNKKLIEELETLKDICSPKTD). The basic motif stretch occupies residues 300–325 (RKRELRLMKNREAAKECRRRKKEYVK). Positions 327 to 348 (LESRVAVLEVQNKKLIEELETL) are leucine-zipper.

The protein belongs to the bZIP family. In terms of assembly, binds DNA as a dimer. Interacts with CDC34. Interacts with FHL5. Isoform delta forms a heterodimer with CREB3L4. May interact with TSSK4. Stimulated by phosphorylation. Phosphorylated on Ser-116 by TSSK4 in vitro. In terms of processing, ubiquitinated by CDC34 and RAD6B in order to be degraded by the proteasome. In terms of tissue distribution, isoform Tau is expressed in testis germ cells. CREM-theta1- and CREM-theta2-containing isoforms are expressed in testis.

Its subcellular location is the nucleus. Transcriptional regulator that binds the cAMP response element (CRE), a sequence present in many viral and cellular promoters. Isoforms are either transcriptional activators or repressors. Isoform Delta is an activator. Plays a role in spermatogenesis and is involved in spermatid maturation. Binding of isoform Tau (activator) to CRE is increased by CREB3L4. The CREM isoform Tau-CREB3L4 heterodimer functions through CRE and may recruit HIRA to CRE to regulate histone exchange. The protein is cAMP-responsive element modulator (Crem) of Rattus norvegicus (Rat).